Consider the following 559-residue polypeptide: Forkhead box protein O6 (559 aa).

Disordered stretches follow at residues 1–77 (MAAK…VGPL) and 163–183 (SWWM…RRAV). A DNA-binding region (fork-head) is located at residues 88–182 (WGNLSYADLI…KTGKTPRRRA (95 aa)). Phosphoserine is present on serine 184. 2 disordered regions span residues 197–232 (KASK…KWAA) and 534–559 (NFDS…WVPG). Composition is skewed to pro residues over residues 213–222 (DSPPGAPVPG) and 539–553 (LPPP…PPPN).

Phosphorylation of Ser-184 is be important in regulating the transacriptional activity. As to expression, expressed in brain in areas of the nucleus accumbens, cingulate cortex, parts of the amygdala and in the hippocampus.

It is found in the cytoplasm. It localises to the nucleus. Transcriptional activator. The protein is Forkhead box protein O6 (Foxo6) of Mus musculus (Mouse).